Reading from the N-terminus, the 429-residue chain is Adenylosuccinate synthetase (429 aa).

GTP contacts are provided by residues 12–18 and 40–42; these read GDEGKGK and GHT. The active-site Proton acceptor is the D13. Residues D13 and G40 each contribute to the Mg(2+) site. Residues 13 to 16, 38 to 41, T129, R143, Q223, T238, and R302 each bind IMP; these read DEGK and NAGH. Catalysis depends on H41, which acts as the Proton donor. 298–304 serves as a coordination point for substrate; sequence TVTGRQR. Residues R304, 330–332, and 412–414 each bind GTP; these read KID and STS.

The protein belongs to the adenylosuccinate synthetase family. As to quaternary structure, homodimer. Requires Mg(2+) as cofactor.

It localises to the cytoplasm. The catalysed reaction is IMP + L-aspartate + GTP = N(6)-(1,2-dicarboxyethyl)-AMP + GDP + phosphate + 2 H(+). It functions in the pathway purine metabolism; AMP biosynthesis via de novo pathway; AMP from IMP: step 1/2. In terms of biological role, plays an important role in the de novo pathway of purine nucleotide biosynthesis. Catalyzes the first committed step in the biosynthesis of AMP from IMP. The chain is Adenylosuccinate synthetase from Erythrobacter litoralis (strain HTCC2594).